A 217-amino-acid chain; its full sequence is Somatotropin (217 aa).

Residues 1–27 (MMAAGPRTSLLLAFTLLCLPWTQVVGA) form the signal peptide. His-46 is a binding site for Zn(2+). The cysteines at positions 79 and 190 are disulfide-linked. Ser-132 carries the phosphoserine modification. Glu-199 is a binding site for Zn(2+). Cys-207 and Cys-215 are disulfide-bonded.

This sequence belongs to the somatotropin/prolactin family.

It localises to the secreted. Plays an important role in growth control. Its major role in stimulating body growth is to stimulate the liver and other tissues to secrete IGF1. It stimulates both the differentiation and proliferation of myoblasts. It also stimulates amino acid uptake and protein synthesis in muscle and other tissues. This Capra hircus (Goat) protein is Somatotropin (GH1).